The primary structure comprises 474 residues: Putative matrix metalloproteinase (474 aa).

The first 17 residues, 1-17 (MIIYFAVITCSLKLCRS), serve as a signal peptide directing secretion. Histidine 189 contributes to the Zn(2+) binding site. Glutamate 190 is an active-site residue. Histidine 193 and histidine 199 together coordinate Zn(2+). Residues 299 to 344 (AGVYDAISYVRGDLYVFVGDLHWRFDTSGMLHNGYPQPTGATWRLP) form a Hemopexin repeat.

Belongs to the peptidase M10A family. Zn(2+) serves as cofactor.

The sequence is that of Putative matrix metalloproteinase from Heliothis virescens ascovirus 3e (HvAV-3e).